We begin with the raw amino-acid sequence, 657 residues long: Broad substrate specificity ATP-binding cassette transporter ABCG2 (657 aa).

Residues 1–24 (MSSSNDHVLVPMSQRNNNGLPRTN) are disordered. Topologically, residues 1 to 393 (MSSSNDHVLV…SFKNLLGNPQ (393 aa)) are cytoplasmic. Polar residues predominate over residues 13–24 (SQRNNNGLPRTN). The ABC transporter domain maps to 48 to 285 (VKSGFLVRKT…FASAGYHCEP (238 aa)). ATP contacts are provided by residues 79-86 (GPTGGGKS), 183-189 (RGISGGE), Glu-210, and His-242. An ABC transmembrane type-2 domain is found at 389 to 653 (LGNPQASVAQ…TIAYLKLLFL (265 aa)). The chain crosses the membrane as a helical span at residues 394–414 (ASVAQLIVTVILGLIIGAIYF). Over 415-428 (DLKYDAAGMQNRAG) the chain is Extracellular. The chain crosses the membrane as a helical span at residues 429–449 (VLFFLTTNQCFSSVSAVELFV). At 450–477 (VEKKLFIHEYISGYYRVSSYFFGKVMSD) the chain is on the cytoplasmic side. The helical transmembrane segment at 478 to 498 (LLPMRFLPSVIFTCVLYFMLG) threads the bilayer. Residues 499 to 506 (LKKTVDAF) lie on the Extracellular side of the membrane. The helical transmembrane segment at 507–527 (FIMMFTLIMVAYTASSMALAI) threads the bilayer. Residues 528–535 (ATGQSVVS) lie on the Cytoplasmic side of the membrane. A helical transmembrane segment spans residues 536–556 (VATLLMTIAFVFMMLFSGLLV). Residues 557 to 632 (NLRTIGPWLS…LSPWGLWKNH (76 aa)) are Extracellular-facing. Cysteines 592 and 610 form a disulfide. 2 N-linked (GlcNAc...) asparagine glycosylation sites follow: Asn-596 and Asn-600. The helical transmembrane segment at 633–653 (VALACMIIIFLTIAYLKLLFL) threads the bilayer. At 654 to 657 (KKYS) the chain is on the cytoplasmic side.

Belongs to the ABC transporter superfamily. ABCG family. Eye pigment precursor importer (TC 3.A.1.204) subfamily. Homodimer; disulfide-linked. The minimal functional unit is a homodimer, but the major oligomeric form in plasma membrane is a homotetramer with possibility of higher order oligomerization up to homododecamers. N-glycosylated. Glycosylation-deficient ABCG2 is normally expressed and functional. In terms of processing, phosphorylated. Phosphorylation may regulate the localization to the plasma membrane, the homooligomerization and therefore, the activity of the transporter. In terms of tissue distribution, highly expressed in kidney. Lower expression in liver, colon, heart, spleen, and placenta. Expressed in mammary gland. Expressed in intestinal villi and renal proximal tubules, hepatic bile canalicular membranes, and placental labyrinth cells (at protein level).

The protein localises to the cell membrane. The protein resides in the apical cell membrane. Its subcellular location is the mitochondrion membrane. The enzyme catalyses ATP + H2O + xenobioticSide 1 = ADP + phosphate + xenobioticSide 2.. The catalysed reaction is riboflavin(in) + ATP + H2O = riboflavin(out) + ADP + phosphate + H(+). It catalyses the reaction pheophorbide a(in) + ATP + H2O = pheophorbide a(out) + ADP + phosphate + H(+). It carries out the reaction urate(in) + ATP + H2O = urate(out) + ADP + phosphate + H(+). The enzyme catalyses indoxyl sulfate(in) + ATP + H2O = indoxyl sulfate(out) + ADP + phosphate + H(+). The catalysed reaction is sphing-4-enine 1-phosphate(in) + ATP + H2O = sphing-4-enine 1-phosphate(out) + ADP + phosphate + H(+). It catalyses the reaction estrone 3-sulfate(in) + ATP + H2O = estrone 3-sulfate(out) + ADP + phosphate + H(+). It carries out the reaction dehydroepiandrosterone 3-sulfate(in) + ATP + H2O = dehydroepiandrosterone 3-sulfate(out) + ADP + phosphate + H(+). The enzyme catalyses 4-methylumbelliferone sulfate(in) + ATP + H2O = 4-methylumbelliferone sulfate(out) + ADP + phosphate + H(+). The catalysed reaction is 5,7-dimethyl-2-methylamino-4-(3-pyridylmethyl)-1,3-benzothiazol-6-yl beta-D-glucuronate(in) + ATP + H2O = 5,7-dimethyl-2-methylamino-4-(3-pyridylmethyl)-1,3-benzothiazol-6-yl beta-D-glucuronate(out) + ADP + phosphate + H(+). It catalyses the reaction 4-methylumbelliferone beta-D-glucuronate(in) + ATP + H2O = 4-methylumbelliferone beta-D-glucuronate(out) + ADP + phosphate + H(+). It carries out the reaction 5,7-dimethyl-2-methylamino-4-(3-pyridylmethyl)-1,3-benzothiazol-6-yl sulfate(in) + ATP + H2O = 5,7-dimethyl-2-methylamino-4-(3-pyridylmethyl)-1,3-benzothiazol-6-yl sulfate(out) + ADP + phosphate + H(+). The enzyme catalyses 17beta-estradiol 17-O-(beta-D-glucuronate)(in) + ATP + H2O = 17beta-estradiol 17-O-(beta-D-glucuronate)(out) + ADP + phosphate + H(+). The catalysed reaction is methotrexate(in) + ATP + H2O = methotrexate(out) + ADP + phosphate + H(+). It catalyses the reaction itaconate(in) + ATP + H2O = itaconate(out) + ADP + phosphate + H(+). Specifically inhibited by the fungal toxin fumitremorgin C and Ko143. Broad substrate specificity ATP-dependent transporter of the ATP-binding cassette (ABC) family that actively extrudes a wide variety of physiological compounds, dietary toxins and xenobiotics from cells. Involved in porphyrin homeostasis, mediating the export of protoporphyrin IX (PPIX) from both mitochondria to cytosol and cytosol to extracellular space, it also functions in the cellular export of heme. Also mediates the efflux of sphingosine-1-P from cells. Acts as a urate exporter functioning in both renal and extrarenal urate excretion. In kidney, it also functions as a physiological exporter of the uremic toxin indoxyl sulfate. Also involved in the excretion of steroids like estrone 3-sulfate/E1S, 3beta-sulfooxy-androst-5-en-17-one/DHEAS, and other sulfate conjugates. Mediates the secretion of the riboflavin and biotin vitamins into milk. Extrudes pheophorbide a, a phototoxic porphyrin catabolite of chlorophyll, reducing its bioavailability. Plays an important role in the exclusion of xenobiotics from the brain. It confers to cells a resistance to multiple drugs and other xenobiotics including mitoxantrone, pheophorbide, camptothecin, methotrexate, azidothymidine, and the anthracyclines daunorubicin and doxorubicin, through the control of their efflux. In placenta, it limits the penetration of drugs from the maternal plasma into the fetus. May play a role in early stem cell self-renewal by blocking differentiation. In inflammatory macrophages, exports itaconate from the cytosol to the extracellular compartment and limits the activation of TFEB-dependent lysosome biogenesis involved in antibacterial innate immune response. The protein is Broad substrate specificity ATP-binding cassette transporter ABCG2 (Abcg2) of Mus musculus (Mouse).